The primary structure comprises 272 residues: R3H domain-containing protein 4 (272 aa).

Positions 141–167 (LEDEGKSKARRRGPTRGEDRRREDPAY) are disordered. Basic and acidic residues predominate over residues 155–165 (TRGEDRRREDP). The 64-residue stretch at 191-254 (METLETWEER…KRQMKVSNRH (64 aa)) folds into the R3H domain.

The protein resides in the nucleus. The chain is R3H domain-containing protein 4 (R3HDM4) from Bos taurus (Bovine).